The primary structure comprises 239 residues: MNIEQFQSMLEEKGITLSSRQLEQFEIYFETLVEWNEKMNLTAITEKEEVYLKHFFDSITAAFYYDFSKPFSICDVGAGAGFPSIPLKICFPHLKVTIVDSLQKRINFLNHLAQKLELSDVAFCHDRAETFGKKEGVREAYDIVMARAVARLSVLSELCLPLVKVGGTFIAMKGAAAKEEIENGKYALEVLGGDLKEMSTFQLPFEESERNILLIEKKRKTPKKYPRKPGTPNKLPIEK.

S-adenosyl-L-methionine contacts are provided by residues Gly77, Phe82, 128–129 (AE), and Arg147.

Belongs to the methyltransferase superfamily. RNA methyltransferase RsmG family.

It is found in the cytoplasm. Functionally, specifically methylates the N7 position of guanine in position 535 of 16S rRNA. The chain is Ribosomal RNA small subunit methyltransferase G from Bacillus cereus (strain ZK / E33L).